The primary structure comprises 215 residues: Peroxiredoxin (215 aa).

The Thioredoxin domain occupies 3 to 158; sequence PLLGDNFPEI…ILRAVKALQV (156 aa). The active-site Cysteine sulfenic acid (-SOH) intermediate is Cys45. Arg121 provides a ligand contact to substrate. An intrachain disulfide couples Cys205 to Cys211.

It belongs to the peroxiredoxin family. Prx6 subfamily. Homodecamer. Pentamer of dimers that assemble into a ring structure.

It is found in the cytoplasm. The enzyme catalyses a hydroperoxide + [thioredoxin]-dithiol = an alcohol + [thioredoxin]-disulfide + H2O. Its function is as follows. Thiol-specific peroxidase that catalyzes the reduction of hydrogen peroxide and organic hydroperoxides to water and alcohols, respectively. Plays a role in cell protection against oxidative stress by detoxifying peroxides. The protein is Peroxiredoxin of Archaeoglobus fulgidus (strain ATCC 49558 / DSM 4304 / JCM 9628 / NBRC 100126 / VC-16).